The primary structure comprises 289 residues: Probable prolyl 4-hydroxylase 10 (289 aa).

A helical; Signal-anchor for type II membrane protein transmembrane segment spans residues 20–40 (LVFAVLIMSTFVILILLAFGI). Residues 41 to 289 (LSVPSNNAGS…KWLRVHEYKV (249 aa)) are Lumenal-facing. One can recognise a Fe2OG dioxygenase domain in the interval 161–284 (HGEGLQVLHY…KWSSTKWLRV (124 aa)). Residues histidine 179 and aspartate 181 each contribute to the Fe cation site. Asparagine 220 carries an N-linked (GlcNAc...) asparagine glycan. Residue histidine 265 participates in Fe cation binding. Lysine 275 lines the 2-oxoglutarate pocket.

The protein belongs to the P4HA family. Fe(2+) is required as a cofactor. L-ascorbate serves as cofactor.

Its subcellular location is the endoplasmic reticulum membrane. The catalysed reaction is L-prolyl-[collagen] + 2-oxoglutarate + O2 = trans-4-hydroxy-L-prolyl-[collagen] + succinate + CO2. Its function is as follows. Catalyzes the post-translational formation of 4-hydroxyproline in -Xaa-Pro-Gly- sequences in proline-rich peptide sequences of plant glycoproteins and other proteins. Hydroxyprolines are important constituent of many plant cell wall glycoproteins such as extensins, hydroxyproline-rich glycoproteins, lectins and arabinogalactan proteins. The sequence is that of Probable prolyl 4-hydroxylase 10 from Arabidopsis thaliana (Mouse-ear cress).